An 81-amino-acid chain; its full sequence is Photosystem I iron-sulfur center (81 aa).

4Fe-4S ferredoxin-type domains follow at residues 2–31 (AHSVKIYDTCIGCTQCVRACPTDVLEMVPW) and 39–68 (IASAPRTEDCVGCKRCESACPTDFLSVRVY). Residues cysteine 11, cysteine 14, cysteine 17, cysteine 21, cysteine 48, cysteine 51, cysteine 54, and cysteine 58 each contribute to the [4Fe-4S] cluster site.

As to quaternary structure, the eukaryotic PSI reaction center is composed of at least 11 subunits. It depends on [4Fe-4S] cluster as a cofactor.

It is found in the plastid. The protein localises to the chloroplast thylakoid membrane. It carries out the reaction reduced [plastocyanin] + hnu + oxidized [2Fe-2S]-[ferredoxin] = oxidized [plastocyanin] + reduced [2Fe-2S]-[ferredoxin]. Apoprotein for the two 4Fe-4S centers FA and FB of photosystem I (PSI); essential for photochemical activity. FB is the terminal electron acceptor of PSI, donating electrons to ferredoxin. The C-terminus interacts with PsaA/B/D and helps assemble the protein into the PSI complex. Required for binding of PsaD and PsaE to PSI. PSI is a plastocyanin-ferredoxin oxidoreductase, converting photonic excitation into a charge separation, which transfers an electron from the donor P700 chlorophyll pair to the spectroscopically characterized acceptors A0, A1, FX, FA and FB in turn. The protein is Photosystem I iron-sulfur center of Physcomitrium patens (Spreading-leaved earth moss).